The primary structure comprises 1090 residues: Vinculin (1090 aa).

2 consecutive repeat copies span residues 339-446 (DADN…SQNS) and 455-561 (QNAQ…DLGD). The tract at residues 339-561 (DADNVTVMRK…LKNALRDLGD (223 aa)) is 2 X repeats. Disordered stretches follow at residues 811–842 (GVPMSNGRHSSYQESISRASPYNPPPPSSQVI) and 864–895 (DIPAPPRPPPPVELSPPPRPPPPPEYDEEEET). Over residues 817-830 (GRHSSYQESISRAS) the composition is skewed to polar residues. The segment covering 866–887 (PAPPRPPPPVELSPPPRPPPPP) has biased composition (pro residues).

The protein belongs to the vinculin/alpha-catenin family. May interact with sorb-1. In terms of tissue distribution, expressed in gonadal sheath cells and the spermatheca. Expressed in body wall muscles.

It is found in the cytoplasm. It localises to the cytoskeleton. The protein resides in the cell junction. Its subcellular location is the adherens junction. The protein localises to the cell membrane. It is found in the focal adhesion. Its function is as follows. Involved in cell adhesion. May be involved in the attachment of the actin-based microfilaments to the plasma membrane. Involved in ovulation. The chain is Vinculin from Caenorhabditis elegans.